The chain runs to 187 residues: Shikimate kinase (187 aa).

Residue 18–23 participates in ATP binding; it reads GCGKST. Serine 22 lines the Mg(2+) pocket. Positions 40, 64, and 86 each coordinate substrate. Residue arginine 128 coordinates ATP. Arginine 147 serves as a coordination point for substrate. Residue arginine 164 participates in ATP binding.

The protein belongs to the shikimate kinase family. In terms of assembly, monomer. Mg(2+) is required as a cofactor.

It localises to the cytoplasm. It carries out the reaction shikimate + ATP = 3-phosphoshikimate + ADP + H(+). Its pathway is metabolic intermediate biosynthesis; chorismate biosynthesis; chorismate from D-erythrose 4-phosphate and phosphoenolpyruvate: step 5/7. In terms of biological role, catalyzes the specific phosphorylation of the 3-hydroxyl group of shikimic acid using ATP as a cosubstrate. The chain is Shikimate kinase from Rhodopirellula baltica (strain DSM 10527 / NCIMB 13988 / SH1).